Consider the following 173-residue polypeptide: MKMHMKHLDLYSQAIKTLRWTQPMRALSTVNTSSGVQGNLSPAAPAPEPDKLYSKLEIELRGIDPAVLKSYTWFATTAAEHLGIEKGKCWSPRKAHHERMTLLKSVHIYKKHRVQYEVRTHFRYMNFHKLTGSTLDTFLEYIERNLPEGVALQASRTELQEIPEHLRQPPEQV.

The protein belongs to the universal ribosomal protein uS10 family. In terms of assembly, component of the mitochondrial ribosome small subunit (28S) which comprises a 12S rRNA and about 30 distinct proteins.

It is found in the mitochondrion. In Drosophila melanogaster (Fruit fly), this protein is Small ribosomal subunit protein uS10m (mRpS10).